The following is a 188-amino-acid chain: Elongation factor P (188 aa).

Lysine 34 is modified (N6-(3,6-diaminohexanoyl)-5-hydroxylysine).

It belongs to the elongation factor P family. Post-translationally, may be beta-lysylated on the epsilon-amino group of Lys-34 by the combined action of EpmA and EpmB, and then hydroxylated on the C5 position of the same residue by EpmC (if this protein is present). Lysylation is critical for the stimulatory effect of EF-P on peptide-bond formation. The lysylation moiety may extend toward the peptidyltransferase center and stabilize the terminal 3-CCA end of the tRNA. Hydroxylation of the C5 position on Lys-34 may allow additional potential stabilizing hydrogen-bond interactions with the P-tRNA.

Its subcellular location is the cytoplasm. It functions in the pathway protein biosynthesis; polypeptide chain elongation. Functionally, involved in peptide bond synthesis. Alleviates ribosome stalling that occurs when 3 or more consecutive Pro residues or the sequence PPG is present in a protein, possibly by augmenting the peptidyl transferase activity of the ribosome. Modification of Lys-34 is required for alleviation. This is Elongation factor P from Pectobacterium atrosepticum (strain SCRI 1043 / ATCC BAA-672) (Erwinia carotovora subsp. atroseptica).